A 72-amino-acid chain; its full sequence is uncharacterized protein (72 aa).

Positions 1–38 are enriched in low complexity; it reads MSIFSSLSSLSTGSLKSSVSSIENGSSSGSFGSNETSG. The tract at residues 1–42 is disordered; that stretch reads MSIFSSLSSLSTGSLKSSVSSIENGSSSGSFGSNETSGWGQH.

This is an uncharacterized protein from Dictyostelium discoideum (Social amoeba).